We begin with the raw amino-acid sequence, 592 residues long: Bifunctional dolabella-3,7-dien-18-ol synthase/dolathalia-3,7,11-triene synthase TPS20, chloroplastic (592 aa).

A chloroplast-targeting transit peptide spans 1 to 52 (MEAITKNGSLSQTLVHCGPKSLSSFIPVRCLRFSKNPFPKKLVVTRARTSIN). The Mg(2+) site is built by aspartate 349, aspartate 353, aspartate 491, threonine 495, and glutamate 499. A DDXXD motif motif is present at residues 349-353 (DDLYD).

Belongs to the terpene synthase family. Tpsa subfamily. The cofactor is Mg(2+). It depends on Mn(2+) as a cofactor.

The protein resides in the plastid. The protein localises to the chloroplast. It catalyses the reaction (2E,6E,10E)-geranylgeranyl diphosphate + H2O = (3E,7E)-dolabella-3,7-dien-18-ol + diphosphate. It carries out the reaction (2E,6E,10E)-geranylgeranyl diphosphate = (3E,7E)-dolathalia-3,7,11-triene + diphosphate. It functions in the pathway secondary metabolite biosynthesis; terpenoid biosynthesis. Functionally, involved in the biosynthesis of diterpenes in roots. Possesses dolabella-3,7-dien-18-ol synthase activity and dolathalia-3,7,11-triene synthase activity in vitro. Catalyzes the formation of dolabella-3,7-dien-18-ol and dolathalia-3,7,11-triene from geranygeranyl diphosphate (GGPP). Does not seem to be involved in sesquiterpene biosynthesis. The polypeptide is Bifunctional dolabella-3,7-dien-18-ol synthase/dolathalia-3,7,11-triene synthase TPS20, chloroplastic (Arabidopsis thaliana (Mouse-ear cress)).